A 421-amino-acid polypeptide reads, in one-letter code: MNTLQRRKTHQVRIDHITVGSEAPVVIQSMTNTDTADAKATALQIKELSDAGSEMVRITVNSPEAASKVAEIRRRLDDMGYATPLIGDFHFNGERLLAEFPECGKALSKYRINPGNVGKGVKGDEKFAFMIRTAAENDKAVRIGVNWGSLDQSLAKRMMDANLASSAPKPPEEVTKEALIVSALESAEKAVLLGLPEDKIILSCKVSAVQDLIQVYRELGSRCAYPLHLGLTEAGMGSKGIVASTAALSVLLQEGIGDTIRISLTPEPGSPRTQEVVVGQEILQTMGLRSFTPMVTACPGCGRTTSTVFQELAQDVQNYLRQKMSIWRTLYPGVESLNVAVMGCVVNGPGESKLADIGISLPGTGETPVAPVYVDGERKVTLKGDNIATEFLAIVEEYVKTNYGENGSKRNQNKIIPIQSL.

Cys298, Cys301, Cys344, and Glu351 together coordinate [4Fe-4S] cluster.

This sequence belongs to the IspG family. It depends on [4Fe-4S] cluster as a cofactor.

It carries out the reaction (2E)-4-hydroxy-3-methylbut-2-enyl diphosphate + oxidized [flavodoxin] + H2O + 2 H(+) = 2-C-methyl-D-erythritol 2,4-cyclic diphosphate + reduced [flavodoxin]. It functions in the pathway isoprenoid biosynthesis; isopentenyl diphosphate biosynthesis via DXP pathway; isopentenyl diphosphate from 1-deoxy-D-xylulose 5-phosphate: step 5/6. In terms of biological role, converts 2C-methyl-D-erythritol 2,4-cyclodiphosphate (ME-2,4cPP) into 1-hydroxy-2-methyl-2-(E)-butenyl 4-diphosphate. The sequence is that of 4-hydroxy-3-methylbut-2-en-1-yl diphosphate synthase (flavodoxin) from Neisseria meningitidis serogroup C (strain 053442).